Reading from the N-terminus, the 208-residue chain is Small ribosomal subunit protein uS4 (208 aa).

The S4 RNA-binding domain occupies 98–163 (SRLDNVVYRA…LTPFVIARAV (66 aa)).

This sequence belongs to the universal ribosomal protein uS4 family. As to quaternary structure, part of the 30S ribosomal subunit. Contacts protein S5. The interaction surface between S4 and S5 is involved in control of translational fidelity.

One of the primary rRNA binding proteins, it binds directly to 16S rRNA where it nucleates assembly of the body of the 30S subunit. Its function is as follows. With S5 and S12 plays an important role in translational accuracy. In Acidothermus cellulolyticus (strain ATCC 43068 / DSM 8971 / 11B), this protein is Small ribosomal subunit protein uS4.